The following is a 747-amino-acid chain: ATP-dependent DNA helicase Hel308 (747 aa).

ATP-binding positions include Q29 and 47–54 (VPTASGKT). A Helicase ATP-binding domain is found at 34-200 (DAGVADGESL…WLDAELVDSS (167 aa)). Residues 145-148 (DEVH) carry the DEAH box motif. A Helicase C-terminal domain is found at 234-434 (PTEAVVRETL…REPSMRTHLL (201 aa)). Residues 711 to 747 (AAGHQQPEMDGVTPDADVKESAAAAGTDDGQANLGDF) form a disordered region.

It belongs to the helicase family. Hel308 subfamily. Monomer.

It catalyses the reaction Couples ATP hydrolysis with the unwinding of duplex DNA by translocating in the 3'-5' direction.. The catalysed reaction is ATP + H2O = ADP + phosphate + H(+). Functionally, DNA-dependent ATPase and 3'-5' DNA helicase that may be involved in repair of stalled replication forks. This Natronomonas pharaonis (strain ATCC 35678 / DSM 2160 / CIP 103997 / JCM 8858 / NBRC 14720 / NCIMB 2260 / Gabara) (Halobacterium pharaonis) protein is ATP-dependent DNA helicase Hel308.